The chain runs to 184 residues: MNTSSGWSRQPPASLSELEIHWLFAPGSLTERLSALGEYSLEPVDQRHAAACAADASLLGVEPDSPIWVREVVMRLDAQPCVTARSIASAHALETQWKPLTGYGSLPLGHILYDDPAIVRAPFECALLMPDDPLDAISRRYARAAAPPRARRSAFVRNGATLVVSECFLPQFWSGFAQARLAGA.

Residues Arg70, Leu108, and Glu166 each contribute to the substrate site.

Belongs to the UbiC family.

It is found in the cytoplasm. The enzyme catalyses chorismate = 4-hydroxybenzoate + pyruvate. It functions in the pathway cofactor biosynthesis; ubiquinone biosynthesis. Removes the pyruvyl group from chorismate, with concomitant aromatization of the ring, to provide 4-hydroxybenzoate (4HB) for the ubiquinone pathway. This is Probable chorismate pyruvate-lyase 1 from Burkholderia pseudomallei (strain 1710b).